The chain runs to 78 residues: UPF0154 protein SSU98_1719 (78 aa).

Residues 3–23 (LGLAILLIVLAFAGGVALGIY) traverse the membrane as a helical segment.

The protein belongs to the UPF0154 family.

Its subcellular location is the cell membrane. In Streptococcus suis (strain 98HAH33), this protein is UPF0154 protein SSU98_1719.